The primary structure comprises 175 residues: Peptide deformylase (175 aa).

2 residues coordinate Fe cation: Cys98 and His140. The active site involves Glu141. Residue His144 coordinates Fe cation.

The protein belongs to the polypeptide deformylase family. It depends on Fe(2+) as a cofactor.

It catalyses the reaction N-terminal N-formyl-L-methionyl-[peptide] + H2O = N-terminal L-methionyl-[peptide] + formate. In terms of biological role, removes the formyl group from the N-terminal Met of newly synthesized proteins. Requires at least a dipeptide for an efficient rate of reaction. N-terminal L-methionine is a prerequisite for activity but the enzyme has broad specificity at other positions. The chain is Peptide deformylase from Nitrobacter hamburgensis (strain DSM 10229 / NCIMB 13809 / X14).